The following is a 218-amino-acid chain: MAEKDEVNTLRARFRGFYPVVIDVETAGFNSGTDALLEIAAITLQMDHHGWLKTHKTLHFNIEPFPGSILQPEALIFNGIDPDNPLRYAVTEREALYELFTIVHQGIKDDDCHRAILVAHNAAFDHSFLMAAANRTKIKHNPFHPFATFDTAALSGLVLGQTVLLKACLTAGIPFNTSEAHSALYDAERTAELFCELVNRWKRLGGWTKVTTSSIHSV.

The Exonuclease domain occupies 20–194 (VVIDVETAGF…YDAERTAELF (175 aa)). Mg(2+) contacts are provided by aspartate 23, glutamate 25, histidine 181, and aspartate 186. Catalysis depends on histidine 181, which acts as the Proton donor/acceptor.

Belongs to the RNase T family. As to quaternary structure, homodimer. Mg(2+) serves as cofactor.

Functionally, trims short 3' overhangs of a variety of RNA species, leaving a one or two nucleotide 3' overhang. Responsible for the end-turnover of tRNA: specifically removes the terminal AMP residue from uncharged tRNA (tRNA-C-C-A). Also appears to be involved in tRNA biosynthesis. This Baumannia cicadellinicola subsp. Homalodisca coagulata protein is Ribonuclease T.